A 562-amino-acid polypeptide reads, in one-letter code: Methionine--tRNA ligase, mitochondrial (562 aa).

The N-terminal 10 residues, 1–10, are a transit peptide targeting the mitochondrion; sequence MLRSLALRTF. The short motif at 43 to 53 is the 'HIGH' region element; sequence FYVNAAPHLGH. The 'KMSKS' region motif lies at 332-336; that stretch reads KMSKS. K335 serves as a coordination point for ATP.

Belongs to the class-I aminoacyl-tRNA synthetase family.

The protein localises to the mitochondrion matrix. It carries out the reaction tRNA(Met) + L-methionine + ATP = L-methionyl-tRNA(Met) + AMP + diphosphate. The sequence is that of Methionine--tRNA ligase, mitochondrial (mars2) from Xenopus laevis (African clawed frog).